Reading from the N-terminus, the 355-residue chain is Uroporphyrinogen decarboxylase (355 aa).

Residues 27–31 (RQAGR), F46, D78, Y155, S210, and H328 contribute to the substrate site.

The protein belongs to the uroporphyrinogen decarboxylase family. Homodimer.

It is found in the cytoplasm. The enzyme catalyses uroporphyrinogen III + 4 H(+) = coproporphyrinogen III + 4 CO2. The protein operates within porphyrin-containing compound metabolism; protoporphyrin-IX biosynthesis; coproporphyrinogen-III from 5-aminolevulinate: step 4/4. In terms of biological role, catalyzes the decarboxylation of four acetate groups of uroporphyrinogen-III to yield coproporphyrinogen-III. This Pseudomonas aeruginosa (strain ATCC 15692 / DSM 22644 / CIP 104116 / JCM 14847 / LMG 12228 / 1C / PRS 101 / PAO1) protein is Uroporphyrinogen decarboxylase.